Here is a 355-residue protein sequence, read N- to C-terminus: MSGQPKRLMVMAGGTGGHVFPGLAVAHHLMAQGWQVRWLGTADRMEADLVPKHGIDIDFIRISGLRGKGVKALLAAPLRIFNAWRQARAIMKRFKPDVVLGMGGYVSGPGGLAAWSLGIPVVLHEQNGIAGLTNQWLAKIATTVMQAFPGAFPNAEVVGNPVRTDVLALPLPQERLAGRDGPIRVLVVGGSQGARVLNQTLPQVAARLGDTVTIWHQSGKGAQHTVEQAYAGVGQSQHKVTEFIDDMAAAYAWADVVVCRSGALTVSEIAAAGLPAIFVPFQHKDRQQYWNALPLENAGAAKIFEQPQFTVEAVADTLAGWSREALLTMAERARAVSIPDATERVASEVSRVART.

Residues 15-17 (TGG), Asn-127, Arg-163, Ser-191, Ile-244, 263-268 (ALTVSE), and Gln-288 each bind UDP-N-acetyl-alpha-D-glucosamine.

Belongs to the glycosyltransferase 28 family. MurG subfamily.

The protein localises to the cell inner membrane. It carries out the reaction di-trans,octa-cis-undecaprenyl diphospho-N-acetyl-alpha-D-muramoyl-L-alanyl-D-glutamyl-meso-2,6-diaminopimeloyl-D-alanyl-D-alanine + UDP-N-acetyl-alpha-D-glucosamine = di-trans,octa-cis-undecaprenyl diphospho-[N-acetyl-alpha-D-glucosaminyl-(1-&gt;4)]-N-acetyl-alpha-D-muramoyl-L-alanyl-D-glutamyl-meso-2,6-diaminopimeloyl-D-alanyl-D-alanine + UDP + H(+). It participates in cell wall biogenesis; peptidoglycan biosynthesis. Its function is as follows. Cell wall formation. Catalyzes the transfer of a GlcNAc subunit on undecaprenyl-pyrophosphoryl-MurNAc-pentapeptide (lipid intermediate I) to form undecaprenyl-pyrophosphoryl-MurNAc-(pentapeptide)GlcNAc (lipid intermediate II). The chain is UDP-N-acetylglucosamine--N-acetylmuramyl-(pentapeptide) pyrophosphoryl-undecaprenol N-acetylglucosamine transferase from Salmonella newport (strain SL254).